A 337-amino-acid polypeptide reads, in one-letter code: Calcium-binding protein 39-like (337 aa).

It belongs to the Mo25 family. Component of a trimeric complex composed of STK11/LKB1, STRAD (STRADA or STRADB) and CAB39/MO25 (CAB39/MO25alpha or CAB39L/MO25beta): the complex tethers STK11/LKB1 in the cytoplasm and stimulates its catalytic activity.

In terms of biological role, component of a complex that binds and activates STK11/LKB1. In the complex, required to stabilize the interaction between CAB39/MO25 (CAB39/MO25alpha or CAB39L/MO25beta) and STK11/LKB1. The polypeptide is Calcium-binding protein 39-like (Cab39l) (Mus musculus (Mouse)).